Consider the following 501-residue polypeptide: Myosin heavy chain, embryonic smooth muscle isoform (501 aa).

A coiled-coil region spans residues 1–457; sequence REAREKETKA…TLKNRLRRGG (457 aa). The tract at residues 1–501 is rodlike tail (S2 and LMM domains); it reads REAREKETKA…VNETQPPQSE (501 aa). 3 disordered regions span residues 182 to 202, 221 to 254, and 397 to 501; these read YQRE…QSKE, LASS…ALLD, and MEKA…PQSE. Residues 223–233 are compositionally biased toward basic and acidic residues; the sequence is SSERARRHAEQ. Over residues 492–501 the composition is skewed to polar residues; sequence VNETQPPQSE.

Muscle myosin is a hexameric protein that consists of 2 heavy chain subunits (MHC), 2 alkali light chain subunits (MLC) and 2 regulatory light chain subunits (MLC-2).

The protein localises to the cytoplasm. It localises to the myofibril. Its function is as follows. Muscle contraction. This chain is Myosin heavy chain, embryonic smooth muscle isoform, found in Oryctolagus cuniculus (Rabbit).